Consider the following 474-residue polypeptide: MDPDYKSRKEAFVSNLTGGSILEINAVTLVAPASVFLWSVLQSRLSFFTPYGPAALITDFLLNVLAILFATTFYSSAPWLLNLLLVSPAFLILMNSRSRRTQTKAKPPQTATAQHGPGASLPIHPFLTTYRAAMMIITCIAILAVDFRVFPRRFAKAENWGTSLMDLGVGSFVFSGGVVSARSVLKSRERGASPKKTLTQRFTSSVRHSVPLLVLGLVRLYSVKNLDYAEHVTEYGVHWNFFFTLGFLPPFVELFEGIATLIPSYEVLSLAVAVLYQVALESTDLKSYILVSPRGPDLLSKNREGVFSFLGYLAIFLAGRATGMRIIPGGISPSNTPQQARKRVLTRYGANIPVSRRLANMPYVLWVAAFNNAQLFLFCLIETILFPSVHRASGSGKNDEAKRTDFATSPILTAFNRGGLAVFLVANLLTGAVNLTVPTLDVDKTRAMAILVGYAALITGVALGLNKANIKISL.

Residue Asn15 is glycosylated (N-linked (GlcNAc...) asparagine). Helical transmembrane passes span 21–41 (ILEINAVTLVAPASVFLWSVL), 54–74 (AALITDFLLNVLAILFATTFY), 75–95 (SSAPWLLNLLLVSPAFLILMN), 125–145 (PFLTTYRAAMMIITCIAILAV), 160–180 (WGTSLMDLGVGSFVFSGGVVS), 304–324 (EGVFSFLGYLAIFLAGRATGM), 361–381 (MPYVLWVAAFNNAQLFLFCLI), 420–440 (LAVFLVANLLTGAVNLTVPTL), and 447–467 (AMAILVGYAALITGVALGLNK).

The protein belongs to the PIGW family.

It is found in the endoplasmic reticulum membrane. Its pathway is glycolipid biosynthesis; glycosylphosphatidylinositol-anchor biosynthesis. Probable acetyltransferase, which acetylates the inositol ring of phosphatidylinositol during biosynthesis of GPI-anchor. This chain is GPI-anchored wall transfer protein 1 (gwt1), found in Emericella nidulans (strain FGSC A4 / ATCC 38163 / CBS 112.46 / NRRL 194 / M139) (Aspergillus nidulans).